The following is a 1153-amino-acid chain: MAHKVKASFQSLKTMPADYRFLGSPISDHLETNLITPPNGHLKNGVNGTASSVGGMDSVNEDSPYSVRSILNGERSSIGDGDSILPLPESNDRKWSDTNVYARKKVLQFWVQLPNGNWELGKIMSTSGEESVIVVTEGKVLKVKSETLVPANPDILDGVDDLMQLSYLNEPAVLYNLEYRYNQDMIYTKAGPVLVAVNPFKEVPLYGNRNIEAYRKRSNESPHVYAIADTAIREMIRDEVNQSIIISGESGAGKTETAKIAMQYLAALGGGSGIEYEILKTNPILEAFGNAKTLRNDNSSRFGKLIEIHFSETGKISGAQIQTFLLEKSRVVQCTEGERSYHIFYQLCAGASPTLREKLNLTSAKQYNYLKQSNCYSINGVDDAERFHAVKEALDIVHVSKEDQENVFAMLAAVLWLGNVSFTIIDNENHVEPEPDESLSTVAKLIGCNINELKLALSKRNMRVNNDTIVQKLTLSQAIDARDALAKSIYACLFDWLVEQINKSLAVGKRRTGRSISILDIYGFESFNKNSFEQFCINYANERLQQHFNRHLFKLEQEEYIQDGIDWTRVDFEDNQECLSLFEKKPLGLLSLLDEESTFPNGTDLTLANKLKQHLNDNSCFRGDRGKAFTVAHYAGEVTYETTGFLEKNRDLLHSDSIQLLSSCSCHLPQAFASSMLIYSEKPLVGPLHKAGGADSQRLSVATKFKGQLFQLMQRLGNTTPHFIRCIKPNNVQSAGLYEQGLVLQQLRCCGVLEVVRISRSGFPTRMFHHKFARRYGFLLLENIAAKDPLSVSVAILHQFNILPEMYQVGYTKLFFRTGQIGVLEDTRNRTLHGILRLQSYFRGHQARCRLKELKTGITILQSFVRGEKMRKEYTELLQRHRASAAIQSHVKRRIASQQYKATVDASAVIQSAIRGELVRRCAGDIGWLSSGGTKRNESDEVLVKASYLSDLQRRVLRTEAALREKEEENDILRQRVQQYDNRWSEYETKMKSMEEIWQKQMKSLQSSLSIAKKSLEVEDSARNSDASVNASDATDLDSGGSHYQMGHGRSRSVGVGLSVISRLAEEFGQRAQVFGDDRKFLMEVKSGQVEANLNPDRELRRLKQMFETWKKDYGGRLRETKLILSKLGSEETGGSAEKVKMNWWGRLRSTRY.

In terms of domain architecture, Myosin N-terminal SH3-like spans 104-153; it reads KKVLQFWVQLPNGNWELGKIMSTSGEESVIVVTEGKVLKVKSETLVPANP. The 673-residue stretch at 157-829 folds into the Myosin motor domain; it reads DGVDDLMQLS…QIGVLEDTRN (673 aa). ATP-binding positions include 248–255 and 296–304; these read GESGAGKT and NDNSSRFGK. 2 actin-binding regions span residues 581–615 and 709–731; these read LFEK…KQHL and LFQL…KPNN. IQ domains are found at residues 831–860, 854–883, and 903–932; these read TLHG…GITI, LKTG…RHRA, and TVDA…LSSG. A coiled-coil region spans residues 948 to 996; it reads YLSDLQRRVLRTEAALREKEEENDILRQRVQQYDNRWSEYETKMKSMEE. The segment at 1020–1050 is disordered; sequence DSARNSDASVNASDATDLDSGGSHYQMGHGR. Polar residues predominate over residues 1024–1033; sequence NSDASVNASD.

Belongs to the TRAFAC class myosin-kinesin ATPase superfamily. Myosin family. Plant myosin class VIII subfamily. In terms of assembly, homodimer.

In terms of biological role, myosin heavy chain that is required for the cell cycle-regulated transport of various organelles and proteins for their segregation. Functions by binding with its tail domain to receptor proteins on organelles and exerting force with its N-terminal motor domain against actin filaments, thereby transporting its cargo along polarized actin cables. The sequence is that of Myosin-3 (VIII-A) from Arabidopsis thaliana (Mouse-ear cress).